Here is a 421-residue protein sequence, read N- to C-terminus: Acetylglutamate kinase (421 aa).

The segment at 1-252 is acetylglutamate kinase; the sequence is MASTKEISQY…PLESSVSITR (252 aa). Substrate contacts are provided by residues 59–60, R81, and N170; that span reads AG. Positions 274-420 constitute an N-acetyltransferase domain; that stretch reads ERVIRATTWK…HCAQHPPTLI (147 aa).

It in the N-terminal section; belongs to the acetylglutamate kinase family. ArgB subfamily.

The protein localises to the cytoplasm. The enzyme catalyses N-acetyl-L-glutamate + ATP = N-acetyl-L-glutamyl 5-phosphate + ADP. Its pathway is amino-acid biosynthesis; L-arginine biosynthesis; N(2)-acetyl-L-ornithine from L-glutamate: step 2/4. This chain is Acetylglutamate kinase (argB), found in Xylella fastidiosa (strain 9a5c).